We begin with the raw amino-acid sequence, 182 residues long: Large ribosomal subunit protein uL6 (182 aa).

It belongs to the universal ribosomal protein uL6 family. In terms of assembly, part of the 50S ribosomal subunit.

Its function is as follows. This protein binds to the 23S rRNA, and is important in its secondary structure. It is located near the subunit interface in the base of the L7/L12 stalk, and near the tRNA binding site of the peptidyltransferase center. This chain is Large ribosomal subunit protein uL6, found in Pelotomaculum thermopropionicum (strain DSM 13744 / JCM 10971 / SI).